Reading from the N-terminus, the 313-residue chain is Cytosolic Fe-S cluster assembly factor NUBP1 homolog (313 aa).

The disordered stretch occupies residues 1-25 (MSDVPDDANAGCPGTGSAGAGKASG). 4 residues coordinate [4Fe-4S] cluster: Cys-12, Cys-26, Cys-29, and Cys-35. Residue 66–73 (GKGGVGKS) participates in ATP binding. Residues Cys-240 and Cys-243 each contribute to the [4Fe-4S] cluster site.

This sequence belongs to the Mrp/NBP35 ATP-binding proteins family. NUBP1/NBP35 subfamily. As to quaternary structure, heterotetramer of 2 NUBP1 and 2 NUBP2 chains. The cofactor is [4Fe-4S] cluster. Expressed in head amphid and labial ciliated sensory neurons and tail phasmid ciliated chemosensory neurons.

It is found in the cytoplasm. Its subcellular location is the cell projection. Functionally, component of the cytosolic iron-sulfur (Fe/S) protein assembly (CIA) machinery. Required for maturation of extramitochondrial Fe-S proteins. The NUBP1-NUBP2 heterotetramer forms a Fe-S scaffold complex, mediating the de novo assembly of an Fe-S cluster and its transfer to target apoproteins. Regulates cilium formation and structure. The polypeptide is Cytosolic Fe-S cluster assembly factor NUBP1 homolog (Caenorhabditis elegans).